Here is a 196-residue protein sequence, read N- to C-terminus: uncharacterized protein (196 aa).

Residues 44–46 (TTA), glycine 80, valine 100, and 107–109 (PSL) contribute to the S-adenosyl-L-methionine site.

The protein belongs to the class IV-like SAM-binding methyltransferase superfamily. RNA methyltransferase TrmH family.

This is an uncharacterized protein from Serratia marcescens.